Reading from the N-terminus, the 432-residue chain is E3 ubiquitin-protein ligase ATL42 (432 aa).

An N-terminal signal peptide occupies residues 1–18 (MYQIFFFFLPLLHSYASA). The helical transmembrane segment at 37–57 (LAVVTGVLAIMFALTFVLLVY) threads the bilayer. The segment at 123 to 165 (CSVCLSKFESVEILRLLPKCRHAFHIGCIDQWLEQHATCPLCR) adopts an RING-type; atypical zinc-finger fold.

The protein belongs to the RING-type zinc finger family. ATL subfamily.

It localises to the membrane. The catalysed reaction is S-ubiquitinyl-[E2 ubiquitin-conjugating enzyme]-L-cysteine + [acceptor protein]-L-lysine = [E2 ubiquitin-conjugating enzyme]-L-cysteine + N(6)-ubiquitinyl-[acceptor protein]-L-lysine.. The protein operates within protein modification; protein ubiquitination. In terms of biological role, E3 ubiquitin-protein ligase able to catalyze polyubiquitination with ubiquitin-conjugating enzyme E2 UBC8 in vitro. This chain is E3 ubiquitin-protein ligase ATL42 (ATL42), found in Arabidopsis thaliana (Mouse-ear cress).